The following is a 123-amino-acid chain: NADH-quinone oxidoreductase subunit A (123 aa).

3 helical membrane-spanning segments follow: residues Tyr11 to Leu31, Ile64 to Val84, and Ile93 to Ile113.

The protein belongs to the complex I subunit 3 family. As to quaternary structure, NDH-1 is composed of 14 different subunits. Subunits NuoA, H, J, K, L, M, N constitute the membrane sector of the complex.

It localises to the cell inner membrane. It catalyses the reaction a quinone + NADH + 5 H(+)(in) = a quinol + NAD(+) + 4 H(+)(out). NDH-1 shuttles electrons from NADH, via FMN and iron-sulfur (Fe-S) centers, to quinones in the respiratory chain. The immediate electron acceptor for the enzyme in this species is believed to be ubiquinone. Couples the redox reaction to proton translocation (for every two electrons transferred, four hydrogen ions are translocated across the cytoplasmic membrane), and thus conserves the redox energy in a proton gradient. The protein is NADH-quinone oxidoreductase subunit A of Rickettsia conorii (strain ATCC VR-613 / Malish 7).